A 142-amino-acid chain; its full sequence is uncharacterized protein (142 aa).

At 1-9 (MDMVSPVLN) the chain is on the cytoplasmic side. Residues 10-30 (LQSSILGELVGIIGKVFFLLI) traverse the membrane as a helical segment. Residues 31–41 (EEIKYPIITPK) lie on the Extracellular side of the membrane. The helical transmembrane segment at 42–62 (IIVDAQISSWSLFFFASICNL) threads the bilayer. Over 63-101 (SAKFREPIVTTSSIISLMESEKDLKNVNEYFQIMAKMLF) the chain is Cytoplasmic. A helical membrane pass occupies residues 102–122 (ILENKIVVSLFVVFNISVLII). Residues 123–142 (VKSEPYSYGKVLFKPSSSIF) lie on the Extracellular side of the membrane.

The protein resides in the membrane. This is an uncharacterized protein from Saccharomyces cerevisiae (strain ATCC 204508 / S288c) (Baker's yeast).